The sequence spans 391 residues: Na(+)/H(+) antiporter NhaA (391 aa).

Transmembrane regions (helical) follow at residues 14–34, 59–79, 95–115, 124–144, 154–174, 177–197, 213–233, 261–281, 287–307, 328–348, and 363–383; these read AGGI…NSPL, LLLW…GLEV, SLPT…YLFF, VGWA…MALL, VFLL…IALF, TDLS…LVAL, IILW…GVVI, FLIL…NVGF, PVPV…VLLF, IAPV…IASL, and IGIL…LSKV.

The protein belongs to the NhaA Na(+)/H(+) (TC 2.A.33) antiporter family.

It is found in the cell inner membrane. It catalyses the reaction Na(+)(in) + 2 H(+)(out) = Na(+)(out) + 2 H(+)(in). Its function is as follows. Na(+)/H(+) antiporter that extrudes sodium in exchange for external protons. In Shewanella amazonensis (strain ATCC BAA-1098 / SB2B), this protein is Na(+)/H(+) antiporter NhaA.